A 132-amino-acid polypeptide reads, in one-letter code: CLAVATA3/ESR (CLE)-related protein TDIF (132 aa).

Positions 1–26 (MDIDLLWSFGGWFFILFPETINYCMA) are cleaved as a signal peptide. A helical transmembrane segment spans residues 42-62 (SCSSLFFVALLIITILITMLQ). Residues 68 to 77 (EVTSLPTHQP) show a composition bias toward polar residues. Residues 68–132 (EVTSLPTHQP…PSGPNPISNR (65 aa)) are disordered. The span at 87 to 96 (STSSTATTTT) shows a compositional bias: low complexity. Residues 101 to 111 (KRTHHQSHPKP) are compositionally biased toward basic residues. Hydroxyproline occurs at positions 123 and 126. An O-linked (Ara...) hydroxyproline glycan is attached at Pro126.

Belongs to the CLV3/ESR signal peptide family. Interacts specifically with the leucine-rich repeat receptor-like protein kinase TDR. The TDIFp peptide contains two hydroxprolines, but hydroxylation had no direct effect on TDIFp activity. Post-translationally, the O-glycosylation (arabinosylation) of the hydroxyproline Pro-126 enhances binding affinity of the TDIFp peptide for its receptor.

The protein localises to the secreted. Its subcellular location is the extracellular space. The protein resides in the cell membrane. In terms of biological role, extracellular signal peptide that regulates cell fate. Represses tracheary element differentiation but promotes the formation of procambial cells adjacent to phloem cells in the veins. This Zinnia elegans (Garden zinnia) protein is CLAVATA3/ESR (CLE)-related protein TDIF.